We begin with the raw amino-acid sequence, 162 residues long: NADH-quinone oxidoreductase subunit I (162 aa).

2 4Fe-4S ferredoxin-type domains span residues 53 to 83 and 93 to 122; these read LRRY…IESE and TRYD…ETRV. Residues cysteine 63, cysteine 66, cysteine 69, cysteine 73, cysteine 102, cysteine 105, cysteine 108, and cysteine 112 each contribute to the [4Fe-4S] cluster site.

The protein belongs to the complex I 23 kDa subunit family. In terms of assembly, NDH-1 is composed of 14 different subunits. Subunits NuoA, H, J, K, L, M, N constitute the membrane sector of the complex. The cofactor is [4Fe-4S] cluster.

The protein resides in the cell inner membrane. The catalysed reaction is a quinone + NADH + 5 H(+)(in) = a quinol + NAD(+) + 4 H(+)(out). Its function is as follows. NDH-1 shuttles electrons from NADH, via FMN and iron-sulfur (Fe-S) centers, to quinones in the respiratory chain. The immediate electron acceptor for the enzyme in this species is believed to be ubiquinone. Couples the redox reaction to proton translocation (for every two electrons transferred, four hydrogen ions are translocated across the cytoplasmic membrane), and thus conserves the redox energy in a proton gradient. The protein is NADH-quinone oxidoreductase subunit I of Nitrosomonas eutropha (strain DSM 101675 / C91 / Nm57).